We begin with the raw amino-acid sequence, 117 residues long: Large ribosomal subunit protein bL20c (117 aa).

It belongs to the bacterial ribosomal protein bL20 family.

The protein localises to the plastid. It localises to the chloroplast. Its function is as follows. Binds directly to 23S ribosomal RNA and is necessary for the in vitro assembly process of the 50S ribosomal subunit. It is not involved in the protein synthesizing functions of that subunit. The sequence is that of Large ribosomal subunit protein bL20c from Calycanthus floridus var. glaucus (Eastern sweetshrub).